The chain runs to 256 residues: Zinc metalloprotease (256 aa).

Histidine 74 functions as the Proton donor in the catalytic mechanism.

The protein belongs to the peptidase M4 family. Zn(2+) is required as a cofactor.

The protein resides in the secreted. Its function is as follows. May play a role in ulcer formation. Proteolytic digestion of gastric mucus has been suggested as an important mechanism by which its pathogenicity is at least partly exerted. The protein is Zinc metalloprotease (hap) of Helicobacter pylori (Campylobacter pylori).